Reading from the N-terminus, the 181-residue chain is Large ribosomal subunit protein uL5 (181 aa).

This sequence belongs to the universal ribosomal protein uL5 family. Part of the 50S ribosomal subunit; contacts the 5S rRNA and probably tRNA. Forms a bridge to the 30S subunit in the 70S ribosome.

This is one of the proteins that bind and probably mediate the attachment of the 5S RNA into the large ribosomal subunit, where it forms part of the central protuberance. In the 70S ribosome it contacts protein S13 of the 30S subunit (bridge B1b), connecting the 2 subunits; this bridge is implicated in subunit movement. May contact the P site tRNA; the 5S rRNA and some of its associated proteins might help stabilize positioning of ribosome-bound tRNAs. The protein is Large ribosomal subunit protein uL5 of Methanococcus maripaludis (strain C5 / ATCC BAA-1333).